The chain runs to 374 residues: UDP-N-acetylglucosamine--N-acetylmuramyl-(pentapeptide) pyrophosphoryl-undecaprenol N-acetylglucosamine transferase (374 aa).

UDP-N-acetyl-alpha-D-glucosamine contacts are provided by residues 13–15, Asn-124, Arg-165, Ser-193, and Gln-294; that span reads TGG.

The protein belongs to the glycosyltransferase 28 family. MurG subfamily.

Its subcellular location is the cell inner membrane. It carries out the reaction di-trans,octa-cis-undecaprenyl diphospho-N-acetyl-alpha-D-muramoyl-L-alanyl-D-glutamyl-meso-2,6-diaminopimeloyl-D-alanyl-D-alanine + UDP-N-acetyl-alpha-D-glucosamine = di-trans,octa-cis-undecaprenyl diphospho-[N-acetyl-alpha-D-glucosaminyl-(1-&gt;4)]-N-acetyl-alpha-D-muramoyl-L-alanyl-D-glutamyl-meso-2,6-diaminopimeloyl-D-alanyl-D-alanine + UDP + H(+). It participates in cell wall biogenesis; peptidoglycan biosynthesis. In terms of biological role, cell wall formation. Catalyzes the transfer of a GlcNAc subunit on undecaprenyl-pyrophosphoryl-MurNAc-pentapeptide (lipid intermediate I) to form undecaprenyl-pyrophosphoryl-MurNAc-(pentapeptide)GlcNAc (lipid intermediate II). The sequence is that of UDP-N-acetylglucosamine--N-acetylmuramyl-(pentapeptide) pyrophosphoryl-undecaprenol N-acetylglucosamine transferase from Rhizobium meliloti (strain 1021) (Ensifer meliloti).